The sequence spans 107 residues: Anti-adapter protein IraM (107 aa).

This sequence belongs to the IraM/RssC family.

The protein resides in the cytoplasm. Functionally, inhibits RpoS proteolysis by regulating RssB activity, thereby increasing the stability of the sigma stress factor RpoS during magnesium starvation. This Escherichia coli (strain K12 / MC4100 / BW2952) protein is Anti-adapter protein IraM.